Reading from the N-terminus, the 130-residue chain is Ribonuclease P protein component 2 (130 aa).

This sequence belongs to the eukaryotic/archaeal RNase P protein component 2 family. Consists of a catalytic RNA component and at least 4-5 protein subunits.

Its subcellular location is the cytoplasm. The enzyme catalyses Endonucleolytic cleavage of RNA, removing 5'-extranucleotides from tRNA precursor.. Part of ribonuclease P, a protein complex that generates mature tRNA molecules by cleaving their 5'-ends. This is Ribonuclease P protein component 2 from Methanococcus maripaludis (strain C7 / ATCC BAA-1331).